A 299-amino-acid polypeptide reads, in one-letter code: tRNA pseudouridine synthase B (299 aa).

Aspartate 38 (nucleophile) is an active-site residue.

The protein belongs to the pseudouridine synthase TruB family. Type 1 subfamily.

It carries out the reaction uridine(55) in tRNA = pseudouridine(55) in tRNA. Functionally, responsible for synthesis of pseudouridine from uracil-55 in the psi GC loop of transfer RNAs. The protein is tRNA pseudouridine synthase B of Pediococcus pentosaceus (strain ATCC 25745 / CCUG 21536 / LMG 10740 / 183-1w).